A 545-amino-acid polypeptide reads, in one-letter code: Cytochrome P450 monooxygenase 212 (545 aa).

Positions 1 to 14 are cleaved as a signal peptide; sequence MAAYAWLYCALALG. Position 486 (C486) interacts with heme.

It belongs to the cytochrome P450 family. It depends on heme as a cofactor.

The protein operates within secondary metabolite biosynthesis. Cytochrome P450 monooxygenase that is able to use anthracene and pyrene as substrates for oxidation. This chain is Cytochrome P450 monooxygenase 212, found in Postia placenta (strain ATCC 44394 / Madison 698-R) (Brown rot fungus).